The sequence spans 356 residues: Septin-12 (356 aa).

Residues 1-23 (MDERRTPSPCSSRPSSPRTPPCE) form a disordered region. Low complexity predominate over residues 7–16 (PSPCSSRPSS). The 272-residue stretch at 44-315 (TGFEFNIMVV…ENYRVLRLNE (272 aa)) folds into the Septin-type G domain. The segment at 44-317 (TGFEFNIMVV…YRVLRLNESH (274 aa)) is interaction with SEPTIN7. Residues 54–61 (GQSGLGKS) are G1 motif. Residues 54 to 61 (GQSGLGKS), threonine 87, glycine 113, 193 to 201 (RADSLTIEE), glycine 249, and arginine 264 each bind GTP. Residues 110 to 113 (DTPG) form a G3 motif region. The G4 motif stretch occupies residues 192-195 (ARAD). Residues 256 to 356 (VNGRCVLGRK…RSKDPRDDEC (101 aa)) are self-association (via N-terminus) to polymerize octameric septin 12-7-6-2/4-2/4-6-7-12 filaments. The interval 330–356 (PASPGQLMAPGPEKVRKRSKDPRDDEC) is disordered.

It belongs to the TRAFAC class TrmE-Era-EngA-EngB-Septin-like GTPase superfamily. Septin GTPase family. Septins polymerize into heterooligomeric protein complexes that form filaments, and can associate with cellular membranes, actin filaments and microtubules. GTPase activity is required for filament formation. Interacts with SEPTIN6 and SEPTIN11. Self-associates. Component of a octameric complex consisting of SEPTIN12, SEPTIN7, SEPTIN6 and SEPTIN2 or SEPTIN4 in the order 12-7-6-2-2-6-7-12 or 12-7-6-4-4-6-7-12 and located in the sperm annulus; the octamer polymerizes into filaments via the SEPTIN12 N- and C-termini; the SEPTIN12:SEPTIN7 association is mediated by the GTP-binding domains. Interacts with SPAG4 and LMNB1. Associates with alpha- and beta-tubulins. As to expression, predominantly expressed in testis and epididymis. Component of the sperm tail annulus (at protein level).

Its subcellular location is the cytoplasm. It is found in the cytoskeleton. It localises to the spindle. The protein localises to the cell projection. The protein resides in the cilium. Its subcellular location is the flagellum. Functionally, filament-forming cytoskeletal GTPase. May play a role in cytokinesis (Potential). Involved in spermatogenesis. Involved in the morphogenesis of sperm heads and the elongation of sperm tails probably implicating the association with alpha- and beta-tubulins. Forms a filamentous structure with SEPTIN7, SEPTIN6, SEPTIN2 and probably SEPTIN4 at the sperm annulus which is required for the structural integrity and motility of the sperm tail during postmeiotic differentiation. The protein is Septin-12 of Rattus norvegicus (Rat).